The sequence spans 67 residues: Small ribosomal subunit protein eS17 (67 aa).

Belongs to the eukaryotic ribosomal protein eS17 family.

The protein is Small ribosomal subunit protein eS17 of Pyrococcus abyssi (strain GE5 / Orsay).